The sequence spans 388 residues: MLTSVRPADVVLEIDLSAIQANFQTISALVGPQVRVAAVVKSDAYGLGLVKVAGALIDAGCDLLFVGNLHEALLLRSSHISAAVAVFCDEFARYGEHYRSNGLIPVVNNSVELDAICGAREPQAYFLNVETGLSRLGLAFDDVRRRYLGGIFKRRPPSVVLSHLACSERAGDAMNLLQWNRFRATSDLLKPTLLSLAASAGVWLGKRYHFDMVRVGSALYGLNSAGIRPNPLKPVVGVKAKTLDARNVARSEAVGYGATFRTGRASRLAIAGIGYKHGLPWACANKISVRFAGYSAPLVGRVSMEYITIDVTDVPEALCGPGTNVELLSDDFTVDDLAASAGVHPQEVLTRLGVGCARQYLDGSSASAGFPGNLTNAGPGHDPRAILG.

The active-site Proton acceptor; specific for D-alanine is the Lys-41. Lys-41 carries the N6-(pyridoxal phosphate)lysine modification. Arg-135 is a binding site for substrate. The active-site Proton acceptor; specific for L-alanine is the Tyr-256. Met-304 lines the substrate pocket.

Belongs to the alanine racemase family. The cofactor is pyridoxal 5'-phosphate.

The catalysed reaction is L-alanine = D-alanine. The protein operates within amino-acid biosynthesis; D-alanine biosynthesis; D-alanine from L-alanine: step 1/1. Its function is as follows. Catalyzes the interconversion of L-alanine and D-alanine. May also act on other amino acids. This Mesorhizobium japonicum (strain LMG 29417 / CECT 9101 / MAFF 303099) (Mesorhizobium loti (strain MAFF 303099)) protein is Alanine racemase 3 (alr3).